A 245-amino-acid polypeptide reads, in one-letter code: rRNA adenine N-6-methyltransferase (245 aa).

6 residues coordinate S-adenosyl-L-methionine: Asn10, Leu12, Gly37, Glu58, Asp83, and Ser100.

This sequence belongs to the class I-like SAM-binding methyltransferase superfamily. rRNA adenine N(6)-methyltransferase family.

It carries out the reaction adenosine(2085) in 23S rRNA + 2 S-adenosyl-L-methionine = N(6)-dimethyladenosine(2085) in 23S rRNA + 2 S-adenosyl-L-homocysteine + 2 H(+). Its function is as follows. This protein produces a dimethylation of the adenine residue at position 2085 in 23S rRNA, resulting in reduced affinity between ribosomes and macrolide-lincosamide-streptogramin B antibiotics. The chain is rRNA adenine N-6-methyltransferase (ermBP) from Clostridium perfringens.